The sequence spans 314 residues: tRNA pseudouridine synthase B (314 aa).

The active-site Nucleophile is the Asp54.

This sequence belongs to the pseudouridine synthase TruB family. Type 1 subfamily.

The catalysed reaction is uridine(55) in tRNA = pseudouridine(55) in tRNA. Its function is as follows. Responsible for synthesis of pseudouridine from uracil-55 in the psi GC loop of transfer RNAs. The protein is tRNA pseudouridine synthase B of Cupriavidus metallidurans (strain ATCC 43123 / DSM 2839 / NBRC 102507 / CH34) (Ralstonia metallidurans).